The sequence spans 626 residues: ATP-dependent RNA helicase cyt-19, mitochondrial (626 aa).

The Q motif signature appears at 74 to 103 (ADLAALGVHENVVRAITHGMGYENMTEVQS). The region spanning 106 to 297 (ISPALKGKDI…RSYIDKNNFE (192 aa)) is the Helicase ATP-binding domain. An ATP-binding site is contributed by 119 to 126 (AKTGTGKT). The DEAD box motif lies at 241–244 (DEAD). Positions 329–493 (AMLELIEKAL…CASVNAADSG (165 aa)) constitute a Helicase C-terminal domain. Residues 569 to 626 (LRVETREHSMRPMGSGPGHRRDFNSRGPRRQSDDPFENALHRAQDLDRRPTRRQQASF) are disordered. An RNA-binding region spans residues 578-626 (MRPMGSGPGHRRDFNSRGPRRQSDDPFENALHRAQDLDRRPTRRQQASF). Residues 607–617 (ALHRAQDLDRR) are compositionally biased toward basic and acidic residues.

The protein belongs to the DEAD box helicase family.

The protein resides in the mitochondrion matrix. The catalysed reaction is ATP + H2O = ADP + phosphate + H(+). With respect to regulation, activated by exposed helices in a group I intron RNA. Functionally, acts as an RNA chaperone to resolve non-native structures formed during RNA folding to promote mitochondrial group I, but also group II, intron splicing. Functions predominantly by disrupting accessible RNA secondary structure and depends on spontaneous openings in tightly packed RNAs to gain access to RNA helices. In Neurospora crassa (strain ATCC 24698 / 74-OR23-1A / CBS 708.71 / DSM 1257 / FGSC 987), this protein is ATP-dependent RNA helicase cyt-19, mitochondrial.